The following is a 239-amino-acid chain: Octanoyltransferase (239 aa).

The 189-residue stretch at 48-236 (EGGDELVWLV…AFETVFGETT (189 aa)) folds into the BPL/LPL catalytic domain. Residues 87 to 94 (RGGEYTYH), 167 to 169 (ALG), and 180 to 182 (GLS) each bind substrate. The active-site Acyl-thioester intermediate is cysteine 198.

Belongs to the LipB family.

It localises to the cytoplasm. It catalyses the reaction octanoyl-[ACP] + L-lysyl-[protein] = N(6)-octanoyl-L-lysyl-[protein] + holo-[ACP] + H(+). It functions in the pathway protein modification; protein lipoylation via endogenous pathway; protein N(6)-(lipoyl)lysine from octanoyl-[acyl-carrier-protein]: step 1/2. In terms of biological role, catalyzes the transfer of endogenously produced octanoic acid from octanoyl-acyl-carrier-protein onto the lipoyl domains of lipoate-dependent enzymes. Lipoyl-ACP can also act as a substrate although octanoyl-ACP is likely to be the physiological substrate. This chain is Octanoyltransferase, found in Rhizobium etli (strain ATCC 51251 / DSM 11541 / JCM 21823 / NBRC 15573 / CFN 42).